The following is a 242-amino-acid chain: Probable septum site-determining protein MinC (242 aa).

Belongs to the MinC family. In terms of assembly, interacts with MinD and FtsZ.

Cell division inhibitor that blocks the formation of polar Z ring septums. Rapidly oscillates between the poles of the cell to destabilize FtsZ filaments that have formed before they mature into polar Z rings. Prevents FtsZ polymerization. The sequence is that of Probable septum site-determining protein MinC from Agrobacterium fabrum (strain C58 / ATCC 33970) (Agrobacterium tumefaciens (strain C58)).